Reading from the N-terminus, the 1396-residue chain is DNA-directed RNA polymerase subunit beta' (1396 aa).

Residues Cys-72, Cys-74, Cys-87, and Cys-90 each contribute to the Zn(2+) site. Residues Asp-463, Asp-465, and Asp-467 each coordinate Mg(2+). Positions 814, 889, 896, and 899 each coordinate Zn(2+).

This sequence belongs to the RNA polymerase beta' chain family. As to quaternary structure, the RNAP catalytic core consists of 2 alpha, 1 beta, 1 beta' and 1 omega subunit. When a sigma factor is associated with the core the holoenzyme is formed, which can initiate transcription. Requires Mg(2+) as cofactor. Zn(2+) serves as cofactor.

It catalyses the reaction RNA(n) + a ribonucleoside 5'-triphosphate = RNA(n+1) + diphosphate. In terms of biological role, DNA-dependent RNA polymerase catalyzes the transcription of DNA into RNA using the four ribonucleoside triphosphates as substrates. The sequence is that of DNA-directed RNA polymerase subunit beta' from Chlamydia muridarum (strain MoPn / Nigg).